A 402-amino-acid chain; its full sequence is 26S proteasome non-ATPase regulatory subunit 4 homolog (402 aa).

In terms of domain architecture, VWFA spans 5 to 189; sequence ATMICIDNSE…LSDVLISTPI (185 aa). Residues 221 to 240 enclose the UIM 1 domain; it reads NVDPELALALRLSMEEERAR. Basic and acidic residues predominate over residues 241–261; it reads QEAIAKKAAEESSGAENKDHA. Disordered stretches follow at residues 241-292 and 302-321; these read QEAI…EDDD and MSMEEGSSGAAAADAAMAEA. 2 consecutive UIM domains span residues 291-310 and 323-342; these read DDAQLLQQALAMSMEEGSSG and VDDQDLALALQMSVQDAGGS. Positions 363-402 are disordered; that stretch reads SLPGVDPNDPSVKDLLASLHGQGEQEKKEDKSDKPEDEKK. Basic and acidic residues predominate over residues 385-402; the sequence is GEQEKKEDKSDKPEDEKK.

It belongs to the proteasome subunit S5A family. Component of the 19S regulatory particle (RP/PA700) base subcomplex of the 26S proteasome. The 26S proteasome is composed of a core protease (CP), known as the 20S proteasome, capped at one or both ends by the 19S regulatory particle (RP/PA700). The RP/PA700 complex is composed of at least 17 different subunits in two subcomplexes, the base and the lid, which form the portions proximal and distal to the 20S proteolytic core, respectively. Interacts with PI4KG4.

Its function is as follows. Plays a role in maintaining the structural integrity of the 19S regulatory particle (RP), subcomplex of the 26S proteasome. Plays a major role in both the direct and indirect recognition of ubiquitinated substrates of ubiquitin/26S proteasome-mediated proteolysis (UPP). Binds and presumably selects ubiquitin-conjugates for destruction. In Oryza sativa subsp. japonica (Rice), this protein is 26S proteasome non-ATPase regulatory subunit 4 homolog.